The following is a 695-amino-acid chain: Glycine--tRNA ligase beta subunit (695 aa).

The protein belongs to the class-II aminoacyl-tRNA synthetase family. As to quaternary structure, tetramer of two alpha and two beta subunits.

The protein localises to the cytoplasm. The enzyme catalyses tRNA(Gly) + glycine + ATP = glycyl-tRNA(Gly) + AMP + diphosphate. This Desulforamulus reducens (strain ATCC BAA-1160 / DSM 100696 / MI-1) (Desulfotomaculum reducens) protein is Glycine--tRNA ligase beta subunit.